A 183-amino-acid polypeptide reads, in one-letter code: Ferredoxin-2, mitochondrial (183 aa).

A mitochondrion-targeting transit peptide spans 1-52; that stretch reads MAASVAWGGVNAGFLLRAARGAWWSRPGGFWGSGEAAAPAIARKFRATGSRP. Positions 68-170 constitute a 2Fe-2S ferredoxin-type domain; it reads VNVVFVDRSG…GAEFTLPKIT (103 aa). [2Fe-2S] cluster-binding residues include Cys105, Cys111, Cys114, and Cys151.

It belongs to the adrenodoxin/putidaredoxin family. As to quaternary structure, component of the mitochondrial core iron-sulfur cluster (ISC) complex composed of NFS1, LYRM4, NDUFAB1, ISCU, FXN, and FDX2; this complex is a heterohexamer containing two copies of each monomer. Form a heterodimer complex with NFS1. Interacts (in both their reduced and oxidized states) with the cysteine desulfurase (NFS1:LYRM4) complex; this interaction stimulates cysteine desulfurase activity, and serves as a reductant for Fe-S cluster assembly. [2Fe-2S] cluster is required as a cofactor.

It localises to the mitochondrion. The protein localises to the mitochondrion matrix. Electron donor, of the core iron-sulfur cluster (ISC) assembly complex, that acts to reduce the persulfide into sulfide during [2Fe-2S] clusters assembly on the scaffolding protein ISCU. The core iron-sulfur cluster (ISC) assembly complex is involved in the de novo synthesis of a [2Fe-2S] cluster, the first step of the mitochondrial iron-sulfur protein biogenesis. This process is initiated by the cysteine desulfurase complex (NFS1:LYRM4:NDUFAB1) that produces persulfide which is delivered on the scaffold protein ISCU in a FXN-dependent manner. Then this complex is stabilized by FDX2 which provides reducing equivalents to accomplish the [2Fe-2S] cluster assembly. Finally, the [2Fe-2S] cluster is transferred from ISCU to chaperone proteins, including HSCB, HSPA9 and GLRX5. Essential for coenzyme Q biosynthesis: together with FDXR, transfers the electrons required for the hydroxylation reaction performed by COQ6. This is Ferredoxin-2, mitochondrial from Bos taurus (Bovine).